We begin with the raw amino-acid sequence, 201 residues long: Recombination protein RecR (201 aa).

Residues 60 to 75 (CSCCGNVDTIDPCTVC) form a C4-type zinc finger. Residues 83–178 (AVIIVVEDVA…RITRLAHGVP (96 aa)) enclose the Toprim domain.

Belongs to the RecR family.

May play a role in DNA repair. It seems to be involved in an RecBC-independent recombinational process of DNA repair. It may act with RecF and RecO. This chain is Recombination protein RecR, found in Rhizobium meliloti (strain 1021) (Ensifer meliloti).